The chain runs to 440 residues: 3-phosphoshikimate 1-carboxyvinyltransferase (440 aa).

Lysine 26, serine 27, and arginine 31 together coordinate 3-phosphoshikimate. Lysine 26 serves as a coordination point for phosphoenolpyruvate. Phosphoenolpyruvate-binding residues include glycine 99 and arginine 127. 4 residues coordinate 3-phosphoshikimate: serine 172, glutamine 174, aspartate 320, and lysine 347. Glutamine 174 is a phosphoenolpyruvate binding site. Residue aspartate 320 is the Proton acceptor of the active site. Residues arginine 351 and arginine 392 each contribute to the phosphoenolpyruvate site.

Belongs to the EPSP synthase family. Monomer.

The protein resides in the cytoplasm. The catalysed reaction is 3-phosphoshikimate + phosphoenolpyruvate = 5-O-(1-carboxyvinyl)-3-phosphoshikimate + phosphate. The protein operates within metabolic intermediate biosynthesis; chorismate biosynthesis; chorismate from D-erythrose 4-phosphate and phosphoenolpyruvate: step 6/7. In terms of biological role, catalyzes the transfer of the enolpyruvyl moiety of phosphoenolpyruvate (PEP) to the 5-hydroxyl of shikimate-3-phosphate (S3P) to produce enolpyruvyl shikimate-3-phosphate and inorganic phosphate. The protein is 3-phosphoshikimate 1-carboxyvinyltransferase of Xanthomonas oryzae pv. oryzae (strain MAFF 311018).